Reading from the N-terminus, the 413-residue chain is Calsequestrin-2 (413 aa).

A signal peptide spans 1 to 19; the sequence is MKRIYLLVVGLYLLSFSRA. At Tyr-282 the chain carries Phosphotyrosine. Residue Asn-335 is glycosylated (N-linked (GlcNAc...) asparagine). The disordered stretch occupies residues 365-413; that stretch reads VLSGKINTEDDDNEDEDDDGDNDNDDDDDDDDNSDEDNDDSDDDDDDDE. A compositionally biased stretch (acidic residues) spans 373 to 413; that stretch reads EDDDNEDEDDDGDNDNDDDDDDDDNSDEDNDDSDDDDDDDE. Residues Ser-398 and Ser-405 each carry the phosphoserine modification.

Belongs to the calsequestrin family. In terms of assembly, monomer, homodimer and homooligomer. Mostly monomeric in the absence of calcium. Forms higher oligomers in a calcium-dependent manner. Dimers associate to form tetramers, that then form linear homomer chains. Interacts with ASPH and TRDN. Phosphorylation in the C-terminus, probably by CK2, moderately increases calcium buffering capacity. In terms of processing, N-glycosylated. As to expression, detected in stomach and vas deferens (at protein level).

Its subcellular location is the sarcoplasmic reticulum lumen. Functionally, calsequestrin is a high-capacity, moderate affinity, calcium-binding protein and thus acts as an internal calcium store in muscle. Calcium ions are bound by clusters of acidic residues at the protein surface, especially at the interface between subunits. Can bind around 60 Ca(2+) ions. Regulates the release of lumenal Ca(2+) via the calcium release channel RYR2; this plays an important role in triggering muscle contraction. Plays a role in excitation-contraction coupling in the heart and in regulating the rate of heart beats. This is Calsequestrin-2 (Casq2) from Rattus norvegicus (Rat).